The following is a 377-amino-acid chain: Enoyl reductase cheB (377 aa).

Residues 18–361 are enoyl reductase (ER) domain; it reads GGSLVIARDV…REISAEKLVV (344 aa). 49–52 is a binding site for NADP(+); the sequence is CDFK. 137 to 144 serves as a coordination point for substrate; the sequence is PCCIATMG. Residues 173 to 176, 200 to 203, Y218, 265 to 266, and T283 each bind NADP(+); these read SSSV, SPKN, and LE. Substrate is bound at residue 285–289; that stretch reads GAIII. Position 354–355 (354–355) interacts with NADP(+); it reads IS.

It belongs to the zinc-containing alcohol dehydrogenase family. Heme serves as cofactor.

Its pathway is secondary metabolite biosynthesis. In terms of biological role, enoyl reductase; part of the gene cluster that mediates the biosynthesis of chaetoglobosin A which has a unique inhibitory activity against actin polymerization in mammalian cells. Chaetoglobosin A and its intermediates are involved in the morphological differentiation of C.globosum. The first step of the pathway is the synthesis of prochaetoglobosin I via condensation of one acetyl-CoA, 8 malonyl-CoA, and a L-tryptophan molecule by the PKS-NRPS hybrid synthetase cheA, followed by reduction of backbone double bond to install desired geometry by the enoyl reductase cheB. Further multiple oxidation steps performed by the cytochrome P450 monooxygenases cheE and cheG, as well as by the FAD-linked oxidoreductase cheF, lead to the formation of chaetoglobosin A. Depending on the order of action of these reductases, distinct intermediates can be identified. Within the pathway, the cytochrome P450 monooxygenase cheE catalyzes a stereospecific epoxidation on prochaetoglobosin I, cytoglobosin D, and chaetoglobosin J intermediates. The FAD-linked oxidoreductase cheF performs dehydrogenation of the C-20 hydroxyl groups in the 20-dihyrochaetoglobosin A and cytoglobosin D intermediates. Finally, the cytochrome P450 monooxygenase cheG can catalyze the stereospecific dihydroxylation of prochaetoglobosin I and prochaetoglobosin IV at C-19 and C-20, respectively. The Diels-Alderase cheD may play a role in the post-PKS-NRPS biosynthetic steps catalyzing Diels-Alder cyclization. This Chaetomium globosum (strain ATCC 6205 / CBS 148.51 / DSM 1962 / NBRC 6347 / NRRL 1970) (Soil fungus) protein is Enoyl reductase cheB.